The sequence spans 219 residues: Oligoribonuclease (219 aa).

One can recognise an Exonuclease domain in the interval 30-193; that stretch reads LVWLDMEMTG…ADIVESIEEL (164 aa). Tyr-151 is an active-site residue.

The protein belongs to the oligoribonuclease family.

It is found in the cytoplasm. Functionally, 3'-to-5' exoribonuclease specific for small oligoribonucleotides. This chain is Oligoribonuclease, found in Ralstonia nicotianae (strain ATCC BAA-1114 / GMI1000) (Ralstonia solanacearum).